A 551-amino-acid polypeptide reads, in one-letter code: uncharacterized protein (551 aa).

4 disordered regions span residues Gly-66–Leu-111, Pro-130–Asn-165, Ala-180–Leu-229, and Ala-277–Ser-303. The residue at position 74 (Ser-74) is a Phosphoserine. Composition is skewed to polar residues over residues Gly-92–Leu-111 and Val-143–Glu-156. The span at Asn-182–Ser-193 shows a compositional bias: low complexity. Over residues Lys-204–Leu-226 the composition is skewed to polar residues. A compositionally biased stretch (low complexity) spans Thr-290–Ser-299.

This is an uncharacterized protein from Schizosaccharomyces pombe (strain 972 / ATCC 24843) (Fission yeast).